Here is a 273-residue protein sequence, read N- to C-terminus: Dermonecrotic toxin LdSicTox-alphaIB1bi (273 aa).

Residue histidine 5 is part of the active site. The Mg(2+) site is built by glutamate 25 and aspartate 27. Histidine 41 acts as the Nucleophile in catalysis. 2 disulfides stabilise this stretch: cysteine 45-cysteine 51 and cysteine 47-cysteine 190. A Mg(2+)-binding site is contributed by aspartate 85. An N-linked (GlcNAc...) asparagine glycan is attached at asparagine 250.

The protein belongs to the arthropod phospholipase D family. Class II subfamily. It depends on Mg(2+) as a cofactor. As to expression, expressed by the venom gland.

It is found in the secreted. It carries out the reaction an N-(acyl)-sphingosylphosphocholine = an N-(acyl)-sphingosyl-1,3-cyclic phosphate + choline. The catalysed reaction is an N-(acyl)-sphingosylphosphoethanolamine = an N-(acyl)-sphingosyl-1,3-cyclic phosphate + ethanolamine. It catalyses the reaction a 1-acyl-sn-glycero-3-phosphocholine = a 1-acyl-sn-glycero-2,3-cyclic phosphate + choline. The enzyme catalyses a 1-acyl-sn-glycero-3-phosphoethanolamine = a 1-acyl-sn-glycero-2,3-cyclic phosphate + ethanolamine. Dermonecrotic toxins cleave the phosphodiester linkage between the phosphate and headgroup of certain phospholipids (sphingolipid and lysolipid substrates), forming an alcohol (often choline) and a cyclic phosphate. This toxin acts on sphingomyelin (SM). It may also act on ceramide phosphoethanolamine (CPE), lysophosphatidylcholine (LPC) and lysophosphatidylethanolamine (LPE), but not on lysophosphatidylserine (LPS), and lysophosphatidylglycerol (LPG). It acts by transphosphatidylation, releasing exclusively cyclic phosphate products as second products. Induces dermonecrosis, hemolysis, increased vascular permeability, edema, inflammatory response, and platelet aggregation. The chain is Dermonecrotic toxin LdSicTox-alphaIB1bi from Loxosceles deserta (Desert recluse spider).